The sequence spans 874 residues: Trimodular acetylaranotin synthesis protein ataIMG (874 aa).

The aminotransferase ataI stretch occupies residues 1-339 (MANLSGLSNR…DSGLLRASSI (339 aa)). Residues 20–39 (RFGFQTTQQAKPTESSKTPI) form a disordered region. Over residues 23–37 (FQTTQQAKPTESSKT) the composition is skewed to polar residues. Residues 340–668 (SYNSMVKGSS…QERTEAEWRT (329 aa)) form an O-methyltransferase ataM region. An S-adenosyl-L-methionine-binding site is contributed by D625. The segment at 669–874 (LAGRTGWEIR…VMEMGPQIGH (206 aa)) is glutathione S-transferase ataG. Positions 699–766 (KPLILAHELE…YLADRFDDGT (68 aa)) constitute a GST N-terminal domain. In terms of domain architecture, GST C-terminal spans 739 to 874 (DPETKAEVIV…VMEMGPQIGH (136 aa)).

The protein in the N-terminal section; belongs to the class-I pyridoxal-phosphate-dependent aminotransferase family. In the 2nd section; belongs to the class I-like SAM-binding methyltransferase superfamily. Cation-independent O-methyltransferase family. This sequence in the C-terminal section; belongs to the GST superfamily. Pyridoxal 5'-phosphate is required as a cofactor.

It carries out the reaction RX + glutathione = an S-substituted glutathione + a halide anion + H(+). It functions in the pathway mycotoxin biosynthesis. Trimodular acetylaranotin synthesis protein; part of the gene cluster that mediates the biosynthesis of acetylaranotin, a member of the epipolythiodioxopiperazine (ETP) class of toxins characterized by a disulfide-bridged cyclic dipeptide. The first step of acetylaranotin biosynthesis is performed by the NRPS ataP which produces diketopiperazine cyclo-L-Phe-L-Phe via the condensation of 2 phenylalanines (L-Phe). The ataC domain of ataTC then catalyzes the formation of bishydroxylation of cyclo-L-Phe-L-Phe. The glutathione S-transferase domain ataG in ataIMG further catalyzes the conjugation of two glutathiones to the bishydroxylated intermediate. Next, the dipeptidase ataJ removes the Glu residues. The following step is performed by the carbon sulfur lyase domain ataI of ataIMG which may convert the bis-cysteinyl adduct to yield an epidithiol intermediate. The ataT domain from ataTC then catalyzes the oxidation of the free dithiols, followed by a cyclization step catalyzed by the cytochrome P450 ataF. AtaF probably acts as an epoxidase to promote a dual epoxidation formation at C8 and C9 along with C8' and C9', followed by the spontaneous nucleophilic attack of the amide nitrogens N10 and N10' to yield an intermediate with the pyrrolidine partial structure. The final steps of acetylaranotin biosynthesis involve the acetylation and ring rearrangement of an epitetrathiodiketopiperazine intermediate to produce acetylaranotin. AtaH probably catalyzes the acetylation of epitetrathiodiketopiperazine to produce a diacetate and ataY is responsible for the formation of the dihydrooxepin moiety that converts the diacetate intermediate to acetylaranotin via acetylapoaranotin. Both enzymes could function independently in the absence of the other. The acetylaranotin bis-thiomethyltransferase ataS located outside of acetylaranotin gene cluster is the main thiomethyltransferase responsible for converting acetylaranotin and its related intermediates to their methylated forms. The chain is Trimodular acetylaranotin synthesis protein ataIMG from Aspergillus terreus (strain NIH 2624 / FGSC A1156).